The following is a 475-amino-acid chain: GDP-fucose protein O-fucosyltransferase 3 (475 aa).

The Cytoplasmic segment spans residues 1–8 (MVRMRRKR). The chain crosses the membrane as a helical; Signal-anchor for type II membrane protein span at residues 9–29 (LWASCICFAAFFFLLVTLQVI). At 30–475 (TELGNSENKA…QEFWMLVFKQ (446 aa)) the chain is on the lumenal side. Residues N107, N165, and N315 are each glycosylated (N-linked (GlcNAc...) asparagine). C386 and C389 are oxidised to a cystine. N-linked (GlcNAc...) asparagine glycosylation occurs at N462.

The protein belongs to the glycosyltransferase 10 family.

The protein resides in the endoplasmic reticulum membrane. The catalysed reaction is L-threonyl-[protein] + GDP-beta-L-fucose = 3-O-(alpha-L-fucosyl)-L-threonyl-[protein] + GDP + H(+). It carries out the reaction L-seryl-[protein] + GDP-beta-L-fucose = 3-O-(alpha-L-fucosyl)-L-seryl-[protein] + GDP + H(+). It functions in the pathway protein modification; protein glycosylation. Functionally, protein O-fucosyltransferase that specifically catalyzes O-fucosylation of serine or threonine residues in EMI domains of target proteins. Attaches fucose through an O-glycosidic linkage. O-fucosylation of EMI domain-containing proteins may be required for facilitating protein folding and secretion. This is GDP-fucose protein O-fucosyltransferase 3 (FUT10) from Gallus gallus (Chicken).